The sequence spans 1230 residues: ABC transporter B family member 5 (1230 aa).

6 helical membrane passes run 27–47 (VLLMIVGSIGAIANGVCSPLM), 78–98 (LVYLGLGALGAAFLQVACWMI), 154–174 (FIQLISTFVGGFVIAFLRGWL), 177–197 (LVMLTSIPLLAMSGAAIAIIV), 253–273 (GFVTGLGLGVMFLVFFSTYAL), and 286–306 (GYTGGAVINVMVTVVSSSIAL). The region spanning 30 to 318 (MIVGSIGAIA…ASPCLTAFTA (289 aa)) is the ABC transmembrane type-1 1 domain. The ABC transporter 1 domain occupies 353-589 (IELRDVCFSY…HEGAYSQLLR (237 aa)). 388-395 (GESGSGKS) serves as a coordination point for ATP. Residues Asn-540, Asn-615, and Asn-616 are each glycosylated (N-linked (GlcNAc...) asparagine). The segment at 602 to 621 (ISDGSISSGSSRGNNSTRQD) is disordered. Over residues 603–617 (SDGSISSGSSRGNNS) the composition is skewed to low complexity. A run of 2 helical transmembrane segments spans residues 662–682 (ILILGTLVGAVNGTIFPIFGI) and 707–727 (MIFVLLGVAAVIVYPTTNYLF). The 288-residue stretch at 663-950 (LILGTLVGAV…ASSFAPDSSK (288 aa)) folds into the ABC transmembrane type-1 2 domain. Asn-759 is a glycosylation site (N-linked (GlcNAc...) asparagine). Transmembrane regions (helical) follow at residues 798–818 (IIAFTASWEVAIIILVIIPFI), 889–909 (GVGFGISFFVLYSVYASCFYV), and 924–944 (VFQVFLALTLTAVGISQASSF). The region spanning 985 to 1223 (IELCHISFTY…EGGVYASLVQ (239 aa)) is the ABC transporter 2 domain. Position 1020–1027 (1020–1027 (GESGSGKS)) interacts with ATP. 3 N-linked (GlcNAc...) asparagine glycosylation sites follow: Asn-1074, Asn-1174, and Asn-1227.

This sequence belongs to the ABC transporter superfamily. ABCB family. Multidrug resistance exporter (TC 3.A.1.201) subfamily.

The protein localises to the membrane. The protein is ABC transporter B family member 5 (ABCB5) of Arabidopsis thaliana (Mouse-ear cress).